A 264-amino-acid polypeptide reads, in one-letter code: tRNA (guanine-N(1)-)-methyltransferase (264 aa).

S-adenosyl-L-methionine contacts are provided by residues glycine 125 and leucine 145–leucine 150.

The protein belongs to the RNA methyltransferase TrmD family. Homodimer.

Its subcellular location is the cytoplasm. The catalysed reaction is guanosine(37) in tRNA + S-adenosyl-L-methionine = N(1)-methylguanosine(37) in tRNA + S-adenosyl-L-homocysteine + H(+). Functionally, specifically methylates guanosine-37 in various tRNAs. This chain is tRNA (guanine-N(1)-)-methyltransferase, found in Burkholderia ambifaria (strain ATCC BAA-244 / DSM 16087 / CCUG 44356 / LMG 19182 / AMMD) (Burkholderia cepacia (strain AMMD)).